Reading from the N-terminus, the 316-residue chain is Glutathione synthetase (316 aa).

Residues 125-310 form the ATP-grasp domain; the sequence is KLFTAWFSDL…ITGMLMDAIE (186 aa). 151 to 207 is an ATP binding site; sequence WEKHSDIILKPLDGMGGASIFRVKEGDPNLGVIAETLTEHGTCYCMAQNYLPAIKDG. 2 residues coordinate Mg(2+): E281 and N283.

This sequence belongs to the prokaryotic GSH synthase family. Mg(2+) serves as cofactor. Mn(2+) is required as a cofactor.

It carries out the reaction gamma-L-glutamyl-L-cysteine + glycine + ATP = glutathione + ADP + phosphate + H(+). It participates in sulfur metabolism; glutathione biosynthesis; glutathione from L-cysteine and L-glutamate: step 2/2. This chain is Glutathione synthetase, found in Shigella flexneri.